Here is a 76-residue protein sequence, read N- to C-terminus: Alpha/kappa-conotoxin-like fe14.1 (76 aa).

The first 24 residues, 1–24 (MPSVRSVTCCCLLWMMLSVQLVTP), serve as a signal peptide directing secretion. Residues 25 to 39 (GSPGTAQLSGHRTAR) constitute a propeptide that is removed on maturation. 2 disulfides stabilise this stretch: C46–C61 and C50–C63. R64 carries the post-translational modification Arginine amide. The propeptide occupies 65 to 76 (GKRDVVSSSMAV).

Belongs to the conotoxin J superfamily. Expressed by the venom duct.

It localises to the secreted. Functionally, highly inhibits both nicotinic acetylcholine receptors (neuronal (alpha-3/beta-4) and muscular (alpha-1/beta-1/epsilon/delta) subtypes) and the voltage-gated potassium channel Kv1.6/KCNA6 subtype. In Conus ferrugineus (Cone snail), this protein is Alpha/kappa-conotoxin-like fe14.1.